Reading from the N-terminus, the 213-residue chain is ATP synthase peripheral stalk subunit OSCP, mitochondrial (213 aa).

Residues 1-23 constitute a mitochondrion transit peptide; the sequence is MAAPAVSGVSQQVRYFGTSVVRP. Positions 5–23 match the SIFI-degron motif; it reads AVSGVSQQVRYFGTSVVRP. N6-acetyllysine is present on residues Lys54, Lys60, Lys70, and Lys73. Residue Lys90 is modified to N6-succinyllysine. N6-acetyllysine; alternate occurs at positions 158 and 162. An N6-succinyllysine; alternate mark is found at Lys158 and Lys162. Residues Lys172, Lys176, and Lys192 each carry the N6-acetyllysine modification. Lys199 is subject to N6-succinyllysine.

It belongs to the ATPase delta chain family. Component of the ATP synthase complex composed at least of ATP5F1A/subunit alpha, ATP5F1B/subunit beta, ATP5MC1/subunit c (homooctomer), MT-ATP6/subunit a, MT-ATP8/subunit 8, ATP5ME/subunit e, ATP5MF/subunit f, ATP5MG/subunit g, ATP5MK/subunit k, ATP5MJ/subunit j, ATP5F1C/subunit gamma, ATP5F1D/subunit delta, ATP5F1E/subunit epsilon, ATP5PF/subunit F6, ATP5PB/subunit b, ATP5PD/subunit d, ATP5PO/subunit OSCP. ATP synthase complex consists of a soluble F(1) head domain (subunits alpha(3) and beta(3)) - the catalytic core - and a membrane F(0) domain - the membrane proton channel (subunits c, a, 8, e, f, g, k and j). These two domains are linked by a central stalk (subunits gamma, delta, and epsilon) rotating inside the F1 region and a stationary peripheral stalk (subunits F6, b, d, and OSCP). In terms of processing, acetylation at Lys-162 decreases ATP production. Deacetylated by SIRT3. In response to mitochondrial stress, the precursor protein is ubiquitinated by the SIFI complex in the cytoplasm before mitochondrial import, leading to its degradation. Within the SIFI complex, UBR4 initiates ubiquitin chain that are further elongated or branched by KCMF1.

The protein resides in the mitochondrion. The protein localises to the mitochondrion inner membrane. Subunit OSCP, of the mitochondrial membrane ATP synthase complex (F(1)F(0) ATP synthase or Complex V) that produces ATP from ADP in the presence of a proton gradient across the membrane which is generated by electron transport complexes of the respiratory chain. ATP synthase complex consist of a soluble F(1) head domain - the catalytic core - and a membrane F(1) domain - the membrane proton channel. These two domains are linked by a central stalk rotating inside the F(1) region and a stationary peripheral stalk. During catalysis, ATP synthesis in the catalytic domain of F(1) is coupled via a rotary mechanism of the central stalk subunits to proton translocation. In vivo, can only synthesize ATP although its ATP hydrolase activity can be activated artificially in vitro. Part of the complex F(0) domain. Part of the complex F(0) domain and the peripheric stalk, which acts as a stator to hold the catalytic alpha(3)beta(3) subcomplex and subunit a/ATP6 static relative to the rotary elements. This chain is ATP synthase peripheral stalk subunit OSCP, mitochondrial, found in Callithrix jacchus (White-tufted-ear marmoset).